The chain runs to 276 residues: Large ribosomal subunit protein uL2 (276 aa).

Positions glycine 222–lysine 276 are disordered. Positions arginine 259–lysine 276 are enriched in basic residues.

This sequence belongs to the universal ribosomal protein uL2 family. In terms of assembly, part of the 50S ribosomal subunit. Forms a bridge to the 30S subunit in the 70S ribosome.

One of the primary rRNA binding proteins. Required for association of the 30S and 50S subunits to form the 70S ribosome, for tRNA binding and peptide bond formation. It has been suggested to have peptidyltransferase activity; this is somewhat controversial. Makes several contacts with the 16S rRNA in the 70S ribosome. The chain is Large ribosomal subunit protein uL2 from Nitratidesulfovibrio vulgaris (strain ATCC 29579 / DSM 644 / CCUG 34227 / NCIMB 8303 / VKM B-1760 / Hildenborough) (Desulfovibrio vulgaris).